Consider the following 264-residue polypeptide: Thiazole synthase (264 aa).

K106 serves as the catalytic Schiff-base intermediate with DXP. 1-deoxy-D-xylulose 5-phosphate is bound by residues G167, 193–194, and 215–216; these read AG and NT.

This sequence belongs to the ThiG family. In terms of assembly, homotetramer. Forms heterodimers with either ThiH or ThiS.

The protein resides in the cytoplasm. The enzyme catalyses [ThiS sulfur-carrier protein]-C-terminal-Gly-aminoethanethioate + 2-iminoacetate + 1-deoxy-D-xylulose 5-phosphate = [ThiS sulfur-carrier protein]-C-terminal Gly-Gly + 2-[(2R,5Z)-2-carboxy-4-methylthiazol-5(2H)-ylidene]ethyl phosphate + 2 H2O + H(+). The protein operates within cofactor biosynthesis; thiamine diphosphate biosynthesis. In terms of biological role, catalyzes the rearrangement of 1-deoxy-D-xylulose 5-phosphate (DXP) to produce the thiazole phosphate moiety of thiamine. Sulfur is provided by the thiocarboxylate moiety of the carrier protein ThiS. In vitro, sulfur can be provided by H(2)S. This is Thiazole synthase from Thioalkalivibrio sulfidiphilus (strain HL-EbGR7).